The primary structure comprises 152 residues: Protein SprT-like (152 aa).

The region spanning 7 to 148 (QRLVEEVSLQ…GKCKGKLILI (142 aa)) is the SprT-like domain. His-67 contacts Zn(2+). Residue Glu-68 is part of the active site. Residue His-71 coordinates Zn(2+).

Belongs to the SprT family. Requires Zn(2+) as cofactor.

The protein localises to the cytoplasm. This is Protein SprT-like from Bacillus cereus (strain ATCC 10987 / NRS 248).